The following is a 621-amino-acid chain: Uptake hydrogenase large subunit (621 aa).

Ni(2+) is bound by residues Cys75, Cys78, Cys600, and Cys603.

Belongs to the [NiFe]/[NiFeSe] hydrogenase large subunit family. Heterodimer of a large and a small subunit. Requires Ni(2+) as cofactor.

The protein localises to the cell membrane. The catalysed reaction is H2 + A = AH2. Functionally, this enzyme recycles the H(2) produced by nitrogenase to increase the production of ATP and to protect nitrogenase against inhibition or damage by O(2) under carbon- or phosphate-limited conditions. The chain is Uptake hydrogenase large subunit (hupL) from Alcaligenes hydrogenophilus.